Consider the following 234-residue polypeptide: Uridylate kinase (234 aa).

ATP-binding positions include 8–11, G51, and R55; that span reads KLSG. Residues D68 and 129-136 contribute to the UMP site; that span reads TSNPFFTT. The ATP site is built by T156, Y162, and D165.

Belongs to the UMP kinase family. In terms of assembly, homohexamer.

The protein localises to the cytoplasm. It carries out the reaction UMP + ATP = UDP + ADP. Its pathway is pyrimidine metabolism; CTP biosynthesis via de novo pathway; UDP from UMP (UMPK route): step 1/1. With respect to regulation, inhibited by UTP. In terms of biological role, catalyzes the reversible phosphorylation of UMP to UDP. The polypeptide is Uridylate kinase (Fervidobacterium nodosum (strain ATCC 35602 / DSM 5306 / Rt17-B1)).